The primary structure comprises 483 residues: Trehalose-6-phosphate synthase (483 aa).

Arginine 22 is a D-glucose 6-phosphate binding site. 42–43 serves as a coordination point for UDP-alpha-D-glucose; it reads GG. Positions 94 and 148 each coordinate D-glucose 6-phosphate. Residues arginine 290 and lysine 295 each contribute to the UDP-alpha-D-glucose site. Arginine 328 is a D-glucose 6-phosphate binding site. 393-397 contacts UDP-alpha-D-glucose; that stretch reads LVAKE.

This sequence belongs to the glycosyltransferase 20 family. In terms of assembly, homotetramer.

The enzyme catalyses ADP-alpha-D-glucose + D-glucose 6-phosphate = alpha,alpha-trehalose 6-phosphate + ADP + H(+). It carries out the reaction CDP-alpha-D-glucose + D-glucose 6-phosphate = alpha,alpha-trehalose 6-phosphate + CDP + H(+). It catalyses the reaction GDP-alpha-D-glucose + D-glucose 6-phosphate = alpha,alpha-trehalose 6-phosphate + GDP + H(+). The catalysed reaction is TDP-alpha-D-glucose + D-glucose 6-phosphate = 5-methyl-UDP + alpha,alpha-trehalose 6-phosphate + H(+). The enzyme catalyses D-glucose 6-phosphate + UDP-alpha-D-glucose = alpha,alpha-trehalose 6-phosphate + UDP + H(+). The protein operates within glycan biosynthesis; trehalose biosynthesis. Probably involved in the osmoprotection via the biosynthesis of trehalose and in the production of glycogen and alpha-glucan via the TreS-Pep2 branch involved in the biosynthesis of maltose-1-phosphate (M1P). Catalyzes the transfer of glucose from UDP-glucose (UDP-Glc) to D-glucose 6-phosphate (Glc-6-P) to form trehalose-6-phosphate. Probably also able to use ADP-Glc, CDP-Glc, GDP-Glc and TDP-Glc as glucosyl donors. This Mycobacterium sp. (strain JLS) protein is Trehalose-6-phosphate synthase.